Consider the following 308-residue polypeptide: MRSEFWFPSMGSLLPPVLLLWLLSCPRLQLGHAQDPAMVHLPGGRFLMGTDAPDGRDGEGPAREVTVKPFAIDIFPVTNKDFREFVREKKYQTEAEAFGWSFVFEDFVSPELRKQENLMPAVHWWQPVPKAFWRQPAGPGSGIREKLELPVVHVSWNDAGAYCAWRGRRLPTEEEWEFAARGGLKGQVYPWGNRFQPNRTNLWQGKFPKGDKAEDGFHGLSPVNAFPPQNNYGLYDLMGNVWEWTASTYQPAGQDMRVLRGASWIDTADGSANHRARVTTRMGNTPDSASDNLGFRCASSAGRPKEDL.

The N-terminal stretch at 1 to 33 (MRSEFWFPSMGSLLPPVLLLWLLSCPRLQLGHA) is a signal peptide. Cysteines 163 and 297 form a disulfide. A glycan (N-linked (GlcNAc...) asparagine) is linked at N198. The Ca(2+) site is built by N201, L202, D215, F217, D236, G239, V241, and E243. The segment covering 281-291 (RMGNTPDSASD) has biased composition (polar residues). Residues 281–308 (RMGNTPDSASDNLGFRCASSAGRPKEDL) form a disordered region. The short motif at 305 to 308 (KEDL) is the Non-canonical ER retention motif element.

The protein belongs to the sulfatase-modifying factor family. As to quaternary structure, homodimer and heterodimer with SUMF1.

It localises to the endoplasmic reticulum lumen. Its function is as follows. Lacks formylglycine generating activity and is unable to convert newly synthesized inactive sulfatases to their active form. Inhibits the activation of sulfatases by SUMF1. This Mus musculus (Mouse) protein is Inactive C-alpha-formylglycine-generating enzyme 2.